Consider the following 115-residue polypeptide: Kunitz-type trypsin inhibitor 1 (115 aa).

The protein belongs to the protease inhibitor I3 (leguminous Kunitz-type inhibitor) family.

Its function is as follows. Exhibits Kunitz trypsin protease inhibitor activity. This is Kunitz-type trypsin inhibitor 1 from Selenicereus undatus (Pitahaya).